The primary structure comprises 261 residues: uncharacterized protein (261 aa).

An N-terminal signal peptide occupies residues 1–22; sequence MKYYGKCISYISILILTFFIGG. The N-palmitoyl cysteine moiety is linked to residue cysteine 23. A lipid anchor (S-diacylglycerol cysteine) is attached at cysteine 23.

It belongs to the staphylococcal tandem lipoprotein family.

It localises to the cell membrane. This is an uncharacterized protein from Staphylococcus epidermidis (strain ATCC 12228 / FDA PCI 1200).